The chain runs to 197 residues: 7-methyl-GTP pyrophosphatase (197 aa).

The active-site Proton acceptor is the Asp79.

It belongs to the Maf family. YceF subfamily.

The protein resides in the cytoplasm. The enzyme catalyses N(7)-methyl-GTP + H2O = N(7)-methyl-GMP + diphosphate + H(+). Functionally, nucleoside triphosphate pyrophosphatase that hydrolyzes 7-methyl-GTP (m(7)GTP). May have a dual role in cell division arrest and in preventing the incorporation of modified nucleotides into cellular nucleic acids. This Dictyostelium discoideum (Social amoeba) protein is 7-methyl-GTP pyrophosphatase.